We begin with the raw amino-acid sequence, 393 residues long: S-adenosylmethionine synthase 2 (393 aa).

E9 provides a ligand contact to Mg(2+). H15 provides a ligand contact to ATP. Residue E43 coordinates K(+). Residues E56 and Q99 each contribute to the L-methionine site. ATP-binding positions include 167–169 (DGK), 235–238 (SGRF), D246, 252–253 (RK), A269, K273, and K277. D246 contacts L-methionine. Residue K277 coordinates L-methionine.

It belongs to the AdoMet synthase family. Homotetramer. The cofactor is Mn(2+). It depends on Mg(2+) as a cofactor. Co(2+) is required as a cofactor. Requires K(+) as cofactor. In terms of tissue distribution, roots and shoots.

Its subcellular location is the cytoplasm. The catalysed reaction is L-methionine + ATP + H2O = S-adenosyl-L-methionine + phosphate + diphosphate. It functions in the pathway amino-acid biosynthesis; S-adenosyl-L-methionine biosynthesis; S-adenosyl-L-methionine from L-methionine: step 1/1. Catalyzes the formation of S-adenosylmethionine from methionine and ATP. The reaction comprises two steps that are both catalyzed by the same enzyme: formation of S-adenosylmethionine (AdoMet) and triphosphate, and subsequent hydrolysis of the triphosphate. The sequence is that of S-adenosylmethionine synthase 2 (SAMS2) from Pinus contorta (Shore pine).